We begin with the raw amino-acid sequence, 59 residues long: UPF0434 protein COSY_0767 (59 aa).

It belongs to the UPF0434 family.

The polypeptide is UPF0434 protein COSY_0767 (Vesicomyosocius okutanii subsp. Calyptogena okutanii (strain HA)).